We begin with the raw amino-acid sequence, 601 residues long: Elongation factor 4 (601 aa).

A tr-type G domain is found at 5–187 (IRKKNFCIIA…AICKYVPSPK (183 aa)). Residues 17–22 (DHGKST) and 134–137 (NKID) each bind GTP.

The protein belongs to the TRAFAC class translation factor GTPase superfamily. Classic translation factor GTPase family. LepA subfamily.

It localises to the cell inner membrane. The enzyme catalyses GTP + H2O = GDP + phosphate + H(+). Its function is as follows. Required for accurate and efficient protein synthesis under certain stress conditions. May act as a fidelity factor of the translation reaction, by catalyzing a one-codon backward translocation of tRNAs on improperly translocated ribosomes. Back-translocation proceeds from a post-translocation (POST) complex to a pre-translocation (PRE) complex, thus giving elongation factor G a second chance to translocate the tRNAs correctly. Binds to ribosomes in a GTP-dependent manner. The sequence is that of Elongation factor 4 from Borreliella afzelii (strain PKo) (Borrelia afzelii).